The sequence spans 284 residues: Tripartite motif-containing protein 12A (284 aa).

The segment at cysteine 15 to arginine 59 adopts an RING-type zinc-finger fold. The segment at glutamine 91–isoleucine 132 adopts a B box-type zinc-finger fold. Positions 96, 99, 118, and 124 each coordinate Zn(2+). Residues alanine 130–serine 234 are a coiled coil.

The protein belongs to the TRIM/RBCC family. As to expression, expressed in embryonic CNS, liver, kidney, olfactory epithelium.

It is found in the cytoplasm. This Mus musculus (Mouse) protein is Tripartite motif-containing protein 12A (Trim12a).